Reading from the N-terminus, the 268-residue chain is MPELPEVETIKNNLQEILPLRIKELEIRREDILRCRDYALEELTGQIIEEASRRGKYLILAVDNGLFLVFHLGMSGRLYIQEEETTVLEPHVHVIIHLDKRLKLLYQDARRFGGLWLLKDTQCFFSRLGKEPLSEEFCPRYLEQVLQGRQTAIKNLLLNQNLISGIGNIYADEALFMAGIRPDRQAASLSVREIEGLCCGIKEVLAKSIKYRGTTFRDYRDGKRQPGEFQNHLQVYGRFNQACPNCGQPLKRSRIGGRSSHYCEKCQQ.

P2 functions as the Schiff-base intermediate with DNA in the catalytic mechanism. Residue E3 is the Proton donor of the active site. K56 functions as the Proton donor; for beta-elimination activity in the catalytic mechanism. DNA contacts are provided by H91, R110, and R149. The FPG-type zinc-finger motif lies at 234–268; that stretch reads QVYGRFNQACPNCGQPLKRSRIGGRSSHYCEKCQQ. R258 functions as the Proton donor; for delta-elimination activity in the catalytic mechanism.

It belongs to the FPG family. In terms of assembly, monomer. It depends on Zn(2+) as a cofactor.

The enzyme catalyses Hydrolysis of DNA containing ring-opened 7-methylguanine residues, releasing 2,6-diamino-4-hydroxy-5-(N-methyl)formamidopyrimidine.. The catalysed reaction is 2'-deoxyribonucleotide-(2'-deoxyribose 5'-phosphate)-2'-deoxyribonucleotide-DNA = a 3'-end 2'-deoxyribonucleotide-(2,3-dehydro-2,3-deoxyribose 5'-phosphate)-DNA + a 5'-end 5'-phospho-2'-deoxyribonucleoside-DNA + H(+). Its function is as follows. Involved in base excision repair of DNA damaged by oxidation or by mutagenic agents. Acts as a DNA glycosylase that recognizes and removes damaged bases. Has a preference for oxidized purines, such as 7,8-dihydro-8-oxoguanine (8-oxoG). Has AP (apurinic/apyrimidinic) lyase activity and introduces nicks in the DNA strand. Cleaves the DNA backbone by beta-delta elimination to generate a single-strand break at the site of the removed base with both 3'- and 5'-phosphates. The polypeptide is Formamidopyrimidine-DNA glycosylase (Syntrophomonas wolfei subsp. wolfei (strain DSM 2245B / Goettingen)).